A 416-amino-acid polypeptide reads, in one-letter code: Gamma-glutamyl phosphate reductase (416 aa).

It belongs to the gamma-glutamyl phosphate reductase family.

It localises to the cytoplasm. It carries out the reaction L-glutamate 5-semialdehyde + phosphate + NADP(+) = L-glutamyl 5-phosphate + NADPH + H(+). Its pathway is amino-acid biosynthesis; L-proline biosynthesis; L-glutamate 5-semialdehyde from L-glutamate: step 2/2. Its function is as follows. Catalyzes the NADPH-dependent reduction of L-glutamate 5-phosphate into L-glutamate 5-semialdehyde and phosphate. The product spontaneously undergoes cyclization to form 1-pyrroline-5-carboxylate. The polypeptide is Gamma-glutamyl phosphate reductase (Salmonella heidelberg (strain SL476)).